A 42-amino-acid polypeptide reads, in one-letter code: Crotamine-IV-2 (42 aa).

Disulfide bonds link Cys4/Cys37, Cys11/Cys31, and Cys19/Cys38.

The protein belongs to the crotamine-myotoxin family. Monomer. In terms of tissue distribution, expressed by the venom gland.

It localises to the secreted. Its function is as follows. Cationic peptide that possesses multiple functions. It acts as a cell-penetrating peptide (CPP), and as a potent voltage-gated potassium channel (Kv) inhibitor. It exhibits antimicrobial activities, and hind limb paralysis. It also induces potent blockade of neuromuscular transmission in young chicken biventer cervicis preparation and potent myotoxic effect. In vivo, induces myonecrosis, upon intramuscular or subcutaneous injections into mice. The protein is Crotamine-IV-2 of Crotalus durissus cumanensis (South American rattlesnake).